Reading from the N-terminus, the 110-residue chain is Multidrug transporter EmrE (110 aa).

A run of 4 helical transmembrane segments spans residues Tyr4–Met21, Val34–Ala52, Ile58–Gly80, and Ala87–Leu104.

It belongs to the drug/metabolite transporter (DMT) superfamily. Small multidrug resistance (SMR) (TC 2.A.7.1) family. In terms of assembly, homodimer. Forms an antiparallel dimeric structure. Also forms dimers of homodimers.

The protein localises to the cell inner membrane. Substrate identity influences both the ground-state and transition-state energies for the conformational exchange process, emphasizing the coupling between substrate binding and transport. Functionally, multidrug efflux protein that confers resistance to a wide range of toxic compounds, including ethidium, methyl viologen, acriflavine, tetraphenylphosphonium (TPP(+)), benzalkonium, propidium, dequalinium and the aminoglycoside antibiotics streptomycin and tobramycin. Can also transport the osmoprotectants betaine and choline. The drug efflux is coupled to an influx of protons. Can couple antiport of a drug to either one or two protons, performing both electrogenic and electroneutral transport of a single substrate. Simultaneously binds and cotransports proton and drug. In Escherichia coli (strain K12), this protein is Multidrug transporter EmrE (emrE).